The primary structure comprises 394 residues: Argininosuccinate synthase (394 aa).

ATP contacts are provided by residues 7–15 (AYSGGLDTS) and Ala34. Positions 85 and 90 each coordinate L-citrulline. Gly115 lines the ATP pocket. Residues Thr117, Asn121, and Asp122 each coordinate L-aspartate. Residue Asn121 participates in L-citrulline binding. Residues Arg125, Ser176, Ser185, Glu261, and Tyr273 each coordinate L-citrulline.

This sequence belongs to the argininosuccinate synthase family. Type 1 subfamily. As to quaternary structure, homotetramer.

The protein localises to the cytoplasm. It carries out the reaction L-citrulline + L-aspartate + ATP = 2-(N(omega)-L-arginino)succinate + AMP + diphosphate + H(+). It participates in amino-acid biosynthesis; L-arginine biosynthesis; L-arginine from L-ornithine and carbamoyl phosphate: step 2/3. The sequence is that of Argininosuccinate synthase from Ehrlichia ruminantium (strain Gardel).